A 257-amino-acid polypeptide reads, in one-letter code: Phosphonates import ATP-binding protein PhnC 1 (257 aa).

The 245-residue stretch at 2 to 246 (IELKNVSKVY…VFKDIYGRPL (245 aa)) folds into the ABC transporter domain. 35-42 (GLSGAGKS) is an ATP binding site.

The protein belongs to the ABC transporter superfamily. Phosphonates importer (TC 3.A.1.9.1) family. As to quaternary structure, the complex is composed of two ATP-binding proteins (PhnC), two transmembrane proteins (PhnE) and a solute-binding protein (PhnD).

It is found in the cell membrane. It catalyses the reaction phosphonate(out) + ATP + H2O = phosphonate(in) + ADP + phosphate + H(+). Functionally, part of the ABC transporter complex PhnCDE involved in phosphonates import. Responsible for energy coupling to the transport system. This is Phosphonates import ATP-binding protein PhnC 1 from Halalkalibacterium halodurans (strain ATCC BAA-125 / DSM 18197 / FERM 7344 / JCM 9153 / C-125) (Bacillus halodurans).